Consider the following 933-residue polypeptide: Isoleucine--tRNA ligase (933 aa).

Residues 57 to 67 (PYANGNIHMGH) carry the 'HIGH' region motif. Residue E556 coordinates L-isoleucyl-5'-AMP. The short motif at 597–601 (KMSKS) is the 'KMSKS' region element. ATP is bound at residue K600. Zn(2+) contacts are provided by C891, C894, C911, and C914.

Belongs to the class-I aminoacyl-tRNA synthetase family. IleS type 1 subfamily. As to quaternary structure, monomer. Zn(2+) serves as cofactor.

It is found in the cytoplasm. The enzyme catalyses tRNA(Ile) + L-isoleucine + ATP = L-isoleucyl-tRNA(Ile) + AMP + diphosphate. In terms of biological role, catalyzes the attachment of isoleucine to tRNA(Ile). As IleRS can inadvertently accommodate and process structurally similar amino acids such as valine, to avoid such errors it has two additional distinct tRNA(Ile)-dependent editing activities. One activity is designated as 'pretransfer' editing and involves the hydrolysis of activated Val-AMP. The other activity is designated 'posttransfer' editing and involves deacylation of mischarged Val-tRNA(Ile). This Pediococcus pentosaceus (strain ATCC 25745 / CCUG 21536 / LMG 10740 / 183-1w) protein is Isoleucine--tRNA ligase.